We begin with the raw amino-acid sequence, 205 residues long: G-protein coupled receptor (205 aa).

A run of 5 helical transmembrane segments spans residues 40 to 60, 71 to 91, 107 to 127, 151 to 171, and 185 to 205; these read GITL…MILY, FYVI…FFMT, LVYF…AIIA, IGIL…FVQI, and LSSP…SFIW. Cysteines 105 and 181 form a disulfide.

The protein belongs to the G-protein coupled receptor 1 family.

Its subcellular location is the host membrane. This chain is G-protein coupled receptor (U12), found in Human herpesvirus 6B (strain Z29) (HHV-6 variant B).